The sequence spans 551 residues: MDRRRFIKGSMAMAAVCGTSGIASLFSQAAFAADSDIADGQTQRFDFSILQSMAHDLAQTAWRGAPRPLPDTLATMTPQAYNSIQYDAEKSLWHNVENRQLDAQFFHMGMGFRRRVRMFSVDPATHLAREIHFRPELFKYNDAGVDTKQLEGQSDLGFAGFRVFKAPELARRDVVSFLGASYFRAVDDTYQYGLSARGLAIDTYTDSKEEFPDFTAFWFDTVKPGATTFTVYALLDSASITGAYKFTIHCEKSQVIMDVENHLYARKDIKQLGISPMTSMFSCGTNERRMCDTIHPQIHDSDRLSMWRGNGEWICRPLNNPQKLQFNAYTDNNPKGFGLLQLDRDFSHYQDIMGWYNKRPSLWVEPRNKWGKGTIGLMEIPTTGETLDNIVCFWQPEKAVKAGDEFAFQYRLYWSAQPPVHCPLARVMATRTGMGGFPEGWAPGEHYPEKWARRFAVDFVGGDLKAAAPKGIEPVITLSSGEAKQIEILYIEPIDGYRIQFDWYPTSDSTDPVDMRMYLRCQGDAISETWLYQYFPPAPDKRQYVDDRVMS.

The segment at residues 1–32 (MDRRRFIKGSMAMAAVCGTSGIASLFSQAAFA) is a signal peptide (tat-type signal).

Belongs to the OpgD/OpgG family. In terms of processing, predicted to be exported by the Tat system. The position of the signal peptide cleavage has not been experimentally proven.

It localises to the periplasm. It participates in glycan metabolism; osmoregulated periplasmic glucan (OPG) biosynthesis. In terms of biological role, probably involved in the control of the structural glucose backbone of osmoregulated periplasmic glucans (OPGs). The protein is Glucans biosynthesis protein D (mdoD) of Shigella flexneri.